Reading from the N-terminus, the 190-residue chain is MENEGKNNMNGMEMEKGKRESRSRKGVELTMRVLALVLTMAAATVLGVAKQTKVVSIKLIPALPPLDITTTAKASYLSAFVYNISANAIACGYTAISIAILMISRGRRSKKLLMAVLLGDLVMVALLFSGTGAASAIGLMGLQGNKHVMWNKVCGVFGKFCHRAAPSLPLTFLAAVVFMFLVVLDAIKLP.

Over residues 1–12 the composition is skewed to low complexity; that stretch reads MENEGKNNMNGM. Residues 1 to 24 form a disordered region; the sequence is MENEGKNNMNGMEMEKGKRESRSR. Residues 1-28 lie on the Cytoplasmic side of the membrane; the sequence is MENEGKNNMNGMEMEKGKRESRSRKGVE. The segment covering 13–24 has biased composition (basic and acidic residues); it reads EMEKGKRESRSR. The chain crosses the membrane as a helical span at residues 29-49; the sequence is LTMRVLALVLTMAAATVLGVA. Residues 50 to 83 are Extracellular-facing; the sequence is KQTKVVSIKLIPALPPLDITTTAKASYLSAFVYN. The chain crosses the membrane as a helical span at residues 84–104; that stretch reads ISANAIACGYTAISIAILMIS. Residues 105–111 lie on the Cytoplasmic side of the membrane; that stretch reads RGRRSKK. A helical membrane pass occupies residues 112–132; sequence LLMAVLLGDLVMVALLFSGTG. The Extracellular portion of the chain corresponds to 133–163; sequence AASAIGLMGLQGNKHVMWNKVCGVFGKFCHR. A helical transmembrane segment spans residues 164–184; sequence AAPSLPLTFLAAVVFMFLVVL. Topologically, residues 185–190 are cytoplasmic; the sequence is DAIKLP.

The protein belongs to the Casparian strip membrane proteins (CASP) family. Homodimer and heterodimers.

It is found in the cell membrane. This is CASP-like protein 1E2 from Arabidopsis lyrata subsp. lyrata (Lyre-leaved rock-cress).